A 316-amino-acid polypeptide reads, in one-letter code: Acetyl-coenzyme A carboxylase carboxyl transferase subunit beta, chloroplastic (316 aa).

Positions 47–316 (LWTRCDNCEN…CKKFQNSFFK (270 aa)) constitute a CoA carboxyltransferase N-terminal domain. The Zn(2+) site is built by Cys51, Cys54, Cys70, and Cys73. Residues 51–73 (CDNCENMLYVRFLRQNKRICEEC) form a C4-type zinc finger.

This sequence belongs to the AccD/PCCB family. In terms of assembly, acetyl-CoA carboxylase is a heterohexamer composed of biotin carboxyl carrier protein, biotin carboxylase and 2 subunits each of ACCase subunit alpha and ACCase plastid-coded subunit beta (accD). Zn(2+) serves as cofactor.

It is found in the plastid. The protein localises to the chloroplast stroma. It catalyses the reaction N(6)-carboxybiotinyl-L-lysyl-[protein] + acetyl-CoA = N(6)-biotinyl-L-lysyl-[protein] + malonyl-CoA. It participates in lipid metabolism; malonyl-CoA biosynthesis; malonyl-CoA from acetyl-CoA: step 1/1. Functionally, component of the acetyl coenzyme A carboxylase (ACC) complex. Biotin carboxylase (BC) catalyzes the carboxylation of biotin on its carrier protein (BCCP) and then the CO(2) group is transferred by the transcarboxylase to acetyl-CoA to form malonyl-CoA. This is Acetyl-coenzyme A carboxylase carboxyl transferase subunit beta, chloroplastic from Marchantia polymorpha (Common liverwort).